Consider the following 190-residue polypeptide: MEKEEVLEIFSKLGVINKGHFLLTSGKHSDTYLQCAKIFQYPKYSEIFSKELALKFKGHEIDVVIGPAIGGIILAYEVARQVGAKALFAEREEGVMKLRRGFEIKEGENVLVVEDVVTTGGSVKEVINLVNSLKGNVIGVGSIVDRSDGKVNFEVPFKSVVSLYVETYEKEECPLCKEGIPLVKPGSRKF.

114-122 (EDVVTTGGS) serves as a coordination point for 5-phospho-alpha-D-ribose 1-diphosphate. Positions 118 and 146 each coordinate orotate.

The protein belongs to the purine/pyrimidine phosphoribosyltransferase family. PyrE subfamily. Homodimer. Mg(2+) is required as a cofactor.

The catalysed reaction is orotidine 5'-phosphate + diphosphate = orotate + 5-phospho-alpha-D-ribose 1-diphosphate. The protein operates within pyrimidine metabolism; UMP biosynthesis via de novo pathway; UMP from orotate: step 1/2. Its function is as follows. Catalyzes the transfer of a ribosyl phosphate group from 5-phosphoribose 1-diphosphate to orotate, leading to the formation of orotidine monophosphate (OMP). The polypeptide is Orotate phosphoribosyltransferase (Thermoanaerobacter sp. (strain X514)).